A 635-amino-acid chain; its full sequence is 1-deoxy-D-xylulose-5-phosphate synthase (635 aa).

Thiamine diphosphate contacts are provided by residues histidine 79 and 120–122; that span reads GHS. A Mg(2+)-binding site is contributed by aspartate 151. Residues 152–153, asparagine 182, tyrosine 291, and glutamate 372 each bind thiamine diphosphate; that span reads GA. Asparagine 182 is a binding site for Mg(2+).

This sequence belongs to the transketolase family. DXPS subfamily. As to quaternary structure, homodimer. Mg(2+) serves as cofactor. The cofactor is thiamine diphosphate.

The enzyme catalyses D-glyceraldehyde 3-phosphate + pyruvate + H(+) = 1-deoxy-D-xylulose 5-phosphate + CO2. Its pathway is metabolic intermediate biosynthesis; 1-deoxy-D-xylulose 5-phosphate biosynthesis; 1-deoxy-D-xylulose 5-phosphate from D-glyceraldehyde 3-phosphate and pyruvate: step 1/1. Catalyzes the acyloin condensation reaction between C atoms 2 and 3 of pyruvate and glyceraldehyde 3-phosphate to yield 1-deoxy-D-xylulose-5-phosphate (DXP). This chain is 1-deoxy-D-xylulose-5-phosphate synthase, found in Xylella fastidiosa (strain M12).